A 621-amino-acid polypeptide reads, in one-letter code: Putative zinc metalloprotease CPn_0344/CP_0416/CPj0344/CpB0350 (621 aa).

His20 contacts Zn(2+). The active site involves Glu21. His24 lines the Zn(2+) pocket. 3 helical membrane passes run 103 to 125, 561 to 583, and 596 to 613; these read ILVL…SILY, VLNL…WEIV, and ILVP…FLTF.

This sequence belongs to the peptidase M50B family. It depends on Zn(2+) as a cofactor.

It is found in the cell inner membrane. In Chlamydia pneumoniae (Chlamydophila pneumoniae), this protein is Putative zinc metalloprotease CPn_0344/CP_0416/CPj0344/CpB0350.